The chain runs to 178 residues: MINTNTLARPYAKAAFEFASAAQQADAWLNMLSLSAAAVQTPAVAQQLVNPALTDEQKVNVLAQICAGHIDASFSNFLRSLGSNDRLSLLPVVREQFAVLKAEAERALDVEVESAFELNAEQLQTLAAALSKRLDRTVQPKPVVNPALIGGVVIRAGDLVIDGSVRGKLNKLAEALKS.

It belongs to the ATPase delta chain family. As to quaternary structure, F-type ATPases have 2 components, F(1) - the catalytic core - and F(0) - the membrane proton channel. F(1) has five subunits: alpha(3), beta(3), gamma(1), delta(1), epsilon(1). F(0) has three main subunits: a(1), b(2) and c(10-14). The alpha and beta chains form an alternating ring which encloses part of the gamma chain. F(1) is attached to F(0) by a central stalk formed by the gamma and epsilon chains, while a peripheral stalk is formed by the delta and b chains.

Its subcellular location is the cell inner membrane. F(1)F(0) ATP synthase produces ATP from ADP in the presence of a proton or sodium gradient. F-type ATPases consist of two structural domains, F(1) containing the extramembraneous catalytic core and F(0) containing the membrane proton channel, linked together by a central stalk and a peripheral stalk. During catalysis, ATP synthesis in the catalytic domain of F(1) is coupled via a rotary mechanism of the central stalk subunits to proton translocation. Its function is as follows. This protein is part of the stalk that links CF(0) to CF(1). It either transmits conformational changes from CF(0) to CF(1) or is implicated in proton conduction. The polypeptide is ATP synthase subunit delta (Ectopseudomonas mendocina (strain ymp) (Pseudomonas mendocina)).